The following is a 313-amino-acid chain: Ribosomal RNA small subunit methyltransferase H (313 aa).

S-adenosyl-L-methionine-binding positions include 35–37, D55, F79, D101, and Q108; that span reads GGH.

This sequence belongs to the methyltransferase superfamily. RsmH family.

Its subcellular location is the cytoplasm. The catalysed reaction is cytidine(1402) in 16S rRNA + S-adenosyl-L-methionine = N(4)-methylcytidine(1402) in 16S rRNA + S-adenosyl-L-homocysteine + H(+). Functionally, specifically methylates the N4 position of cytidine in position 1402 (C1402) of 16S rRNA. In Salmonella paratyphi A (strain ATCC 9150 / SARB42), this protein is Ribosomal RNA small subunit methyltransferase H.